The chain runs to 479 residues: UDP-glycosyltransferase 84A3 (479 aa).

The active-site Proton acceptor is histidine 19. Histidine 19 serves as a coordination point for an anthocyanidin. Residues glutamine 346, histidine 361, tryptophan 364, asparagine 365, serine 366, and glutamate 369 each coordinate UDP-alpha-D-glucose. Glycine 384 contacts an anthocyanidin. UDP-alpha-D-glucose-binding residues include aspartate 385 and glutamine 386.

The protein belongs to the UDP-glycosyltransferase family.

It carries out the reaction (E)-4-coumarate + UDP-alpha-D-glucose = 4-O-(beta-D-glucosyl)-trans-4-coumarate + UDP + H(+). The enzyme catalyses (E)-ferulate + UDP-alpha-D-glucose = 1-O-[(E)-feruloyl]-beta-D-glucose + UDP. The catalysed reaction is (E)-caffeate + UDP-alpha-D-glucose = 1-O-[(E)-caffeoyl]-beta-D-glucose + UDP. It catalyses the reaction (E)-sinapate + UDP-alpha-D-glucose = 1-O-(trans-sinapoyl)-beta-D-glucose + UDP. It carries out the reaction (E)-cinnamate + UDP-alpha-D-glucose = 1-O-(trans-cinnamoyl)-beta-D-glucose + UDP. Its function is as follows. UDP-glucosyltransferase that forms glucose esters with phenylpropanoids. Glucosylates 4-coumarate, ferulate, caffeate, sinapate and cinnamate. The polypeptide is UDP-glycosyltransferase 84A3 (Arabidopsis thaliana (Mouse-ear cress)).